The following is a 285-amino-acid chain: 2-dehydro-3-deoxyphosphooctonate aldolase (285 aa).

It belongs to the KdsA family.

It is found in the cytoplasm. It catalyses the reaction D-arabinose 5-phosphate + phosphoenolpyruvate + H2O = 3-deoxy-alpha-D-manno-2-octulosonate-8-phosphate + phosphate. It functions in the pathway carbohydrate biosynthesis; 3-deoxy-D-manno-octulosonate biosynthesis; 3-deoxy-D-manno-octulosonate from D-ribulose 5-phosphate: step 2/3. It participates in bacterial outer membrane biogenesis; lipopolysaccharide biosynthesis. The polypeptide is 2-dehydro-3-deoxyphosphooctonate aldolase (Acinetobacter baylyi (strain ATCC 33305 / BD413 / ADP1)).